The sequence spans 124 residues: Large ribosomal subunit protein bL12 (124 aa).

The protein belongs to the bacterial ribosomal protein bL12 family. Homodimer. Part of the ribosomal stalk of the 50S ribosomal subunit. Forms a multimeric L10(L12)X complex, where L10 forms an elongated spine to which 2 to 4 L12 dimers bind in a sequential fashion. Binds GTP-bound translation factors.

Its function is as follows. Forms part of the ribosomal stalk which helps the ribosome interact with GTP-bound translation factors. Is thus essential for accurate translation. The chain is Large ribosomal subunit protein bL12 from Azobacteroides pseudotrichonymphae genomovar. CFP2.